Here is a 503-residue protein sequence, read N- to C-terminus: Carboxyl-terminal PDZ ligand of neuronal nitric oxide synthase protein (503 aa).

The 166-residue stretch at 26-191 (FQHGISFEAK…ESERNSDGSG (166 aa)) folds into the PID domain. The segment at 170 to 212 (HTQQNADGQEDGESERNSDGSGDPGRQLTGAERVSTATAEETD) is disordered. Residues Ser-183, Ser-187, Ser-190, and Ser-262 each carry the phosphoserine modification. Residues 266-285 (LLPSSSSSKPPGLGTGTPLS) are disordered. Residues 319–360 (AAEAAARLEAQARVHQLLLQNKDMLQHISLLVKQVQELELKL) adopt a coiled-coil conformation. 4 positions are modified to phosphoserine: Ser-368, Ser-371, Ser-398, and Ser-414. The interaction with NOS1 stretch occupies residues 491-503 (QELGDSLDDEIAV). The short motif at 501–503 (IAV) is the PDZ-binding element.

In terms of assembly, interacts with the PDZ domain of NOS1 or the second PDZ domain of DLG4 through its C-terminus. Interacts with RASD1 and SYN1, SYN2 and SYN3 via its PID domain. Forms a ternary complex with NOS1 and RASD1. Forms a ternary complex with NOS1 and SYN1. As to expression, mainly expressed in brain. Highly expressed in accessory olfactory bulb, caudate-putamen, cerebellum, cerebral cortex, dentate gyrus of the hippocampus, islands of Calleja, olfactory bulb and supraoptic nucleus. Expressed in kidney glomeruli podocytes (at protein level).

It localises to the cell projection. It is found in the filopodium. Its subcellular location is the podosome. Adapter protein involved in neuronal nitric-oxide (NO) synthesis regulation via its association with nNOS/NOS1. The complex formed with NOS1 and synapsins is necessary for specific NO and synapsin functions at a presynaptic level. Mediates an indirect interaction between NOS1 and RASD1 leading to enhance the ability of NOS1 to activate RASD1. Competes with DLG4 for interaction with NOS1, possibly affecting NOS1 activity by regulating the interaction between NOS1 and DLG4. In kidney podocytes, plays a role in podosomes and filopodia formation through CDC42 activation. This Rattus norvegicus (Rat) protein is Carboxyl-terminal PDZ ligand of neuronal nitric oxide synthase protein.